The chain runs to 246 residues: 1-(5-phosphoribosyl)-5-[(5-phosphoribosylamino)methylideneamino] imidazole-4-carboxamide isomerase (246 aa).

Asp-8 functions as the Proton acceptor in the catalytic mechanism. Asp-131 acts as the Proton donor in catalysis.

The protein belongs to the HisA/HisF family.

The protein localises to the cytoplasm. The catalysed reaction is 1-(5-phospho-beta-D-ribosyl)-5-[(5-phospho-beta-D-ribosylamino)methylideneamino]imidazole-4-carboxamide = 5-[(5-phospho-1-deoxy-D-ribulos-1-ylimino)methylamino]-1-(5-phospho-beta-D-ribosyl)imidazole-4-carboxamide. It participates in amino-acid biosynthesis; L-histidine biosynthesis; L-histidine from 5-phospho-alpha-D-ribose 1-diphosphate: step 4/9. In Polaromonas naphthalenivorans (strain CJ2), this protein is 1-(5-phosphoribosyl)-5-[(5-phosphoribosylamino)methylideneamino] imidazole-4-carboxamide isomerase.